Consider the following 689-residue polypeptide: Elongation factor G (689 aa).

Residues 9–283 (AKFRNIGIMA…AIIEFMPSPL (275 aa)) form the tr-type G domain. GTP is bound by residues 18–25 (AHIDAGKT), 82–86 (DTPGH), and 136–139 (NKMD).

Belongs to the TRAFAC class translation factor GTPase superfamily. Classic translation factor GTPase family. EF-G/EF-2 subfamily.

The protein resides in the cytoplasm. Its function is as follows. Catalyzes the GTP-dependent ribosomal translocation step during translation elongation. During this step, the ribosome changes from the pre-translocational (PRE) to the post-translocational (POST) state as the newly formed A-site-bound peptidyl-tRNA and P-site-bound deacylated tRNA move to the P and E sites, respectively. Catalyzes the coordinated movement of the two tRNA molecules, the mRNA and conformational changes in the ribosome. This Clostridium botulinum (strain 657 / Type Ba4) protein is Elongation factor G.